A 196-amino-acid chain; its full sequence is ATP-dependent Clp protease proteolytic subunit (196 aa).

Ser-101 functions as the Nucleophile in the catalytic mechanism. His-126 is a catalytic residue.

This sequence belongs to the peptidase S14 family. In terms of assembly, component of the chloroplastic Clp protease core complex.

It is found in the plastid. Its subcellular location is the chloroplast stroma. The catalysed reaction is Hydrolysis of proteins to small peptides in the presence of ATP and magnesium. alpha-casein is the usual test substrate. In the absence of ATP, only oligopeptides shorter than five residues are hydrolyzed (such as succinyl-Leu-Tyr-|-NHMec, and Leu-Tyr-Leu-|-Tyr-Trp, in which cleavage of the -Tyr-|-Leu- and -Tyr-|-Trp bonds also occurs).. Functionally, cleaves peptides in various proteins in a process that requires ATP hydrolysis. Has a chymotrypsin-like activity. Plays a major role in the degradation of misfolded proteins. This chain is ATP-dependent Clp protease proteolytic subunit, found in Eucalyptus globulus subsp. globulus (Tasmanian blue gum).